Reading from the N-terminus, the 118-residue chain is DNA-binding protein MmarC5_1518 (118 aa).

The span at 1 to 12 shows a compositional bias: basic and acidic residues; the sequence is MNPEEIRQRRLQ. A disordered region spans residues 1–35; sequence MNPEEIRQRRLQEMQAKAQEQGAEDPEAQRQAQEQ.

This sequence belongs to the PDCD5 family.

This Methanococcus maripaludis (strain C5 / ATCC BAA-1333) protein is DNA-binding protein MmarC5_1518.